The following is a 134-amino-acid chain: Transmembrane protein 100 (134 aa).

The tract at residues 1 to 23 (MTEESTKENLGAPKSPTPVTMEK) is disordered. Residue Ser15 is modified to Phosphoserine. Transmembrane regions (helical) follow at residues 56–76 (CIIPFAVVVFITGIVVTAVAY) and 84–104 (IISIFGLVLLSSGLFLLASSA). Ser121 is modified (phosphoserine).

As to quaternary structure, interacts (via C-terminus) with TRPA1 and TRPV1. Interacts with TASOR. In terms of tissue distribution, expressed in dorsal root ganglia. Expressed in neurons as well as nerve fiber bundles connecting ganglia and fibers innervating muscle layer of the gastric body, jejunum, and proximal colon. Expressed in arterial endothelial cells and neurons of the central nervous system and peripheral nervous system (at protein level). Expressed strongly in lung, weakly in brain, heart and muscle. Expressed in enteric neurons and vascular tissue in the muscularis propria of the gastrointestinal tract.

Its subcellular location is the cell membrane. The protein resides in the membrane. It is found in the perikaryon. The protein localises to the cytoplasm. It localises to the perinuclear region. Its subcellular location is the endoplasmic reticulum. Plays a role during embryonic arterial endothelium differentiation and vascular morphogenesis through the ACVRL1 receptor-dependent signaling pathway upon stimulation by bone morphogenetic proteins, such as GDF2/BMP9 and BMP10. Involved in the regulation of nociception, acting as a modulator of the interaction between TRPA1 and TRPV1, two molecular sensors and mediators of pain signals in dorsal root ganglia (DRG) neurons. Mechanistically, it weakens their interaction, thereby releasing the inhibition of TRPA1 by TRPV1 and increasing the single-channel open probability of the TRPA1-TRPV1 complex. The protein is Transmembrane protein 100 (Tmem100) of Mus musculus (Mouse).